A 203-amino-acid chain; its full sequence is MSSQIKLTKNSYRAEKQKLNMLGMYLPTLKLKKALLQAEVQSAIRLAAESTATNEQARDRMYAFAELFSIPLYTDAVEQCFSVDILEKDVENIAGVEVPLLKRVVLTSPEYSLLDTPIWLDSLLASVKEYVVSKIYAENAQERLLLLEEELRRVSIRVNLFEKKLIPTTSQTLKKIAIFLSDRSITDVGQMKMAKKKIQQHKE.

Belongs to the V-ATPase D subunit family.

Produces ATP from ADP in the presence of a proton gradient across the membrane. This is V-type ATP synthase subunit D from Chlamydia trachomatis serovar L2 (strain ATCC VR-902B / DSM 19102 / 434/Bu).